Reading from the N-terminus, the 267-residue chain is Ubiquinone biosynthesis protein COQ4, mitochondrial (267 aa).

Residues 1 to 17 (MSRLKIPSQLLRGGRGF) constitute a mitochondrion transit peptide. Zn(2+)-binding residues include His153, Asp154, His157, and Glu169.

This sequence belongs to the COQ4 family. In terms of assembly, component of a multi-subunit COQ enzyme complex, composed of at least COQ3, COQ4, COQ5, COQ6, COQ7 and COQ9. Zn(2+) is required as a cofactor.

It is found in the mitochondrion inner membrane. The enzyme catalyses a 4-hydroxy-3-methoxy-5-(all-trans-polyprenyl)benzoate + H(+) = a 2-methoxy-6-(all-trans-polyprenyl)phenol + CO2. The protein operates within cofactor biosynthesis; ubiquinone biosynthesis. Its function is as follows. Lyase that catalyzes the C1-decarboxylation of 4-hydroxy-3-methoxy-5-(all-trans-polyprenyl)benzoic acid into 2-methoxy-6-(all-trans-polyprenyl)phenol during ubiquinone biosynthesis. This chain is Ubiquinone biosynthesis protein COQ4, mitochondrial, found in Arthroderma otae (strain ATCC MYA-4605 / CBS 113480) (Microsporum canis).